We begin with the raw amino-acid sequence, 1041 residues long: Nuclear pore complex protein NUP98A (1041 aa).

Polar residues predominate over residues 1–34 (MFGSSNPFGQSSGTSPFGSQSLFGQTSNTSSNNP). The disordered stretch occupies residues 1-44 (MFGSSNPFGQSSGTSPFGSQSLFGQTSNTSSNNPFAPATPFGTS). Repeat copies occupy residues 2-3 (FG), 8-9 (FG), 17-18 (FG), 23-24 (FG), 41-42 (FG), 56-57 (FG), 64-65 (FG), 79-80 (FG), 87-88 (FG), 94-95 (FG), 103-104 (FG), 109-110 (FG), 124-125 (FG), 135-136 (FG), 140-141 (FG), 146-147 (FG), 154-155 (FG), 162-163 (FG), 170-171 (FG), 178-179 (FG), 186-187 (FG), 194-195 (FG), 202-203 (FG), 210-211 (FG), 217-218 (FG), 222-223 (FG), 228-229 (FG), 236-237 (FG), 244-245 (FG), 252-253 (FG), 260-261 (FG), 268-269 (FG), 276-277 (FG), 284-285 (FG), 294-295 (FG), 300-301 (FG), 307-308 (FG), 312-313 (FG), 319-320 (FG), 329-330 (FG), 334-335 (FG), 339-340 (FG), 411-412 (FG), and 427-428 (FG). The tract at residues 2 to 677 (FGSSNPFGQS…QPVAVTNPFG (676 aa)) is 65 X 2 AA repeats of F-G. The interval 98 to 171 (PASSPFGGSS…FGATSTPSFG (74 aa)) is disordered. Polar residues predominate over residues 117–171 (STPQSNPFGNSTQQSQPAFGNTSFGSSTPFGATNTPAFGAPSTPSFGATSTPSFG). 2 disordered regions span residues 315–347 (TPSP…GGSR) and 392–447 (QRGD…TNPF). Low complexity predominate over residues 430-447 (TSANPTNPFSSSTSTNPF). Repeat copies occupy residues 459–460 (FG), 466–467 (FG), 471–472 (FG), 480–481 (FG), 491–492 (FG), 497–498 (FG), 506–507 (FG), 514–515 (FG), 521–522 (FG), 533–534 (FG), 555–556 (FG), 562–563 (FG), 565–566 (FG), 573–574 (FG), 586–587 (FG), 604–605 (FG), 627–628 (FG), 632–633 (FG), 650–651 (FG), 655–656 (FG), and 676–677 (FG). The span at 517-526 (SSSIFGSAPG) shows a compositional bias: low complexity. The disordered stretch occupies residues 517 to 560 (SSSIFGSAPGQGATPAFGNSQPSTLFNSTPSTGQTGSAFGQTGS). Positions 533 to 560 (FGNSQPSTLFNSTPSTGQTGSAFGQTGS) are enriched in polar residues. The tract at residues 734–860 (KYRPGENGPK…KERPYKTLSG (127 aa)) is disordered. Residues 782–793 (SRDKSILPKEQR) are compositionally biased toward basic and acidic residues. A compositionally biased stretch (polar residues) spans 831-846 (TSVNANQKPNGTTRSD). The Peptidase S59 domain maps to 885-1027 (QSDYFTEPRI…GEWKFRVEHF (143 aa)).

It belongs to the nucleoporin GLFG family. Part of the nuclear pore complex (NPC). The NPC has an eight-fold symmetrical structure comprising a central transport channel and two rings, the cytoplasmic and nuclear rings, to which eight filaments are attached. The cytoplasmic filaments have loose ends, while the nuclear filaments are joined in a distal ring, forming a nuclear basket. NPCs are highly dynamic in configuration and composition, and can be devided in 3 subcomplexes, the NUP62 subcomplex, the NUP107-160 subcomplex and the NUP93 subcomplex, containing approximately 30 different nucleoporin proteins.

It localises to the nucleus. The protein localises to the nuclear pore complex. This chain is Nuclear pore complex protein NUP98A, found in Arabidopsis thaliana (Mouse-ear cress).